Here is an 839-residue protein sequence, read N- to C-terminus: Homeobox-leucine zipper protein HOX10 (839 aa).

Disordered stretches follow at residues 1–24 (MAAA…SGMD) and 132–157 (QNTP…RDAS). Residues 24-87 (DSGKYVRYTP…NRRCRDKQRK (64 aa)) constitute a DNA-binding region (homeobox). Residues 91-134 (RLQAVNRKLTAMNKLLMEENERLQKQVSQLVHENAHMRQQLQNT) adopt a coiled-coil conformation. The START domain occupies 155 to 383 (DASNPSGLLS…IAQETSGEVV (229 aa)).

This sequence belongs to the HD-ZIP homeobox family. Class III subfamily. In terms of tissue distribution, expressed in stems, leaf sheaths and blades and panicles.

The protein localises to the nucleus. Probable transcription factor. The polypeptide is Homeobox-leucine zipper protein HOX10 (HOX10) (Oryza sativa subsp. japonica (Rice)).